We begin with the raw amino-acid sequence, 215 residues long: MSKVYDWLEERLEIQAIADDITSKYVPPHVNIFYCLGGITLTCFLVQVATGFAMTFYYRPTVTEAFASVKYIMTEANFGWLIRSVHRWSASMMVLMMILHVFRVYLTGGFKKPRELTWVTGVVLAVLTASFGVTGYSLPWDQIGYWAVKIVTGVPEAIPLIGSPLVELLRGSASVGQSTLTRFYSLHTFVLPLITAVFMLMHFLMIRKQGISGPL.

Residues 32-52 (IFYCLGGITLTCFLVQVATGF) form a helical membrane-spanning segment. Cys35 serves as a coordination point for heme c. Positions 86 and 100 each coordinate heme b. The next 3 helical transmembrane spans lie at 90-110 (ASMM…TGGF), 116-136 (LTWV…VTGY), and 186-206 (LHTF…FLMI). His187 and His202 together coordinate heme b.

It belongs to the cytochrome b family. PetB subfamily. The 4 large subunits of the cytochrome b6-f complex are cytochrome b6, subunit IV (17 kDa polypeptide, PetD), cytochrome f and the Rieske protein, while the 4 small subunits are PetG, PetL, PetM and PetN. The complex functions as a dimer. Heme b is required as a cofactor. It depends on heme c as a cofactor.

It localises to the plastid thylakoid membrane. Functionally, component of the cytochrome b6-f complex, which mediates electron transfer between photosystem II (PSII) and photosystem I (PSI), cyclic electron flow around PSI, and state transitions. This Cuscuta reflexa (Southern Asian dodder) protein is Cytochrome b6 (petB).